Consider the following 167-residue polypeptide: Ribosome maturation factor RimM (167 aa).

The PRC barrel domain maps to 94-167 (EENEYFIKDL…VMVVHLLEGL (74 aa)).

Belongs to the RimM family. Binds ribosomal protein uS19.

The protein localises to the cytoplasm. Functionally, an accessory protein needed during the final step in the assembly of 30S ribosomal subunit, possibly for assembly of the head region. Essential for efficient processing of 16S rRNA. May be needed both before and after RbfA during the maturation of 16S rRNA. It has affinity for free ribosomal 30S subunits but not for 70S ribosomes. The polypeptide is Ribosome maturation factor RimM (Thermoanaerobacter pseudethanolicus (strain ATCC 33223 / 39E) (Clostridium thermohydrosulfuricum)).